The chain runs to 396 residues: 2,3-diketo-5-methylthiopentyl-1-phosphate enolase (396 aa).

The Proton acceptor role is filled by Lys85. Substrate-binding positions include Lys134, 160–163, His251, Gly323, and 345–346; these read KDDE and GG. Residues Lys160, Asp162, and Glu163 each contribute to the Mg(2+) site. Lys160 carries the post-translational modification N6-carboxylysine.

This sequence belongs to the RuBisCO large chain family. Type IV subfamily. In terms of assembly, homodimer. It depends on Mg(2+) as a cofactor.

It carries out the reaction 5-methylsulfanyl-2,3-dioxopentyl phosphate = 2-hydroxy-5-methylsulfanyl-3-oxopent-1-enyl phosphate. It functions in the pathway amino-acid biosynthesis; L-methionine biosynthesis via salvage pathway; L-methionine from S-methyl-5-thio-alpha-D-ribose 1-phosphate: step 3/6. In terms of biological role, catalyzes the enolization of 2,3-diketo-5-methylthiopentyl-1-phosphate (DK-MTP-1-P) into 2-hydroxy-3-keto-5-methylthiopentenyl-1-phosphate (HK-MTPenyl-1-P). The protein is 2,3-diketo-5-methylthiopentyl-1-phosphate enolase of Exiguobacterium sibiricum (strain DSM 17290 / CCUG 55495 / CIP 109462 / JCM 13490 / 255-15).